A 654-amino-acid polypeptide reads, in one-letter code: MGSHAWGGAVFSAATLIAFGSVVHASGTVAETAPQSGHAVPADQLDGETLYKARCAACHDNAEGRTPSREVLSKNPASFILASMRTGAMVPMAEGLTLEEMTAIARAVGKADAKTDDGIDLRRIWGNSVEGTPLDAPQCSSAPTPVDLGAANQWNGWSTEKDNGRFQRKPALDVADIPKLKLKWAFQYPGSKNGQATVIGDRLFTTSTSGAVYALNAKTGCVYWRHAAEGATRTSPVIAALPEGAPAKTALFFSDFTKAAVALDAETGKQLWKTVVDDQPALQMTGSITYWDGKIYVPISSGTEAFAQIPTWECCKFRGALVALDAATGKILWKRYTTEQEPRPFKLNKAGRQMWGPSGGAIWVTPTVDEARRLIYVGTSNSYTDVPYDNSDSVMAIDADTGAVRWTVQLLADDNYIDGCWQKGKEHANCPNPLGPDFSIGAAPIYRKMADGKEFLLVGQKSGMIYALDPANKGAKIWERQLSLGSALGGIEFGTAADDGKVYAGVSDIASQAKDRGKPGLWALDIRTGEVAWNFLNAPDTKCRWNNWWCHGAFSQAISVIPGAIFAGSYDGHFRAFDTATGKIIWDVDTGTKAVTTLSGAKAFGGVMDGAGPTIAGGMVYVHSGYAGRSSESGGRDLRGTDGNILMAFSVDGK.

The signal sequence occupies residues 1–32 (MGSHAWGGAVFSAATLIAFGSVVHASGTVAET). A Cytochrome c domain is found at 42–159 (ADQLDGETLY…AANQWNGWST (118 aa)). 3 residues coordinate heme c: cysteine 55, cysteine 58, and histidine 59.

Belongs to the bacterial PQQ dehydrogenase family. Monomer. Pyrroloquinoline quinone serves as cofactor.

Its subcellular location is the periplasm. The catalysed reaction is a polyvinyl alcohol + 2n Fe(III)-[cytochrome c] = an oxidized polyvinyl alcohol + 2n Fe(II)-[cytochrome c] + 2n H(+). Functionally, catalyzes the oxidation of polyvinyl alcohol (PVA) in the polyvinyl alcohol degradation pathway. This is Polyvinylalcohol dehydrogenase (pvadh) from Sphingopyxis sp. (strain 113P3).